The chain runs to 202 residues: MRGILRMTVLAAAVFGVAGNALAEDWKLAKDEDGVKVYLSSVQGSKYKAYRGVTDIKADVATIEALQEDVKGSCKWIHACAEMKLLKQEGADAWTYSKIDMPWPVTGRDVVIHVTTEKTADGTVIRHLKADPTYIPEEKGQIRVPKLVGEWKLQPKGQGVTEVTYQVETEPGGSIPSWLANSFVVDAPLNTLKGLRSAAEKR.

The START domain maps to 1–202; the sequence is MRGILRMTVL…KGLRSAAEKR (202 aa).

May play a role in the interaction of the bacterium with animal cells. This is an uncharacterized protein from Pseudomonas aeruginosa (strain ATCC 15692 / DSM 22644 / CIP 104116 / JCM 14847 / LMG 12228 / 1C / PRS 101 / PAO1).